Reading from the N-terminus, the 350-residue chain is Glycerol-1-phosphate dehydrogenase [NAD(P)+] (350 aa).

NAD(+)-binding positions include 97 to 101 (GSIID) and 119 to 122 (TTAS). Asp124 provides a ligand contact to substrate. Ser128 is a binding site for NAD(+). Asp171 lines the substrate pocket. Residues Asp171 and His251 each contribute to the Zn(2+) site. His255 lines the substrate pocket. Residue His267 coordinates Zn(2+).

It belongs to the glycerol-1-phosphate dehydrogenase family. The cofactor is Zn(2+).

The protein resides in the cytoplasm. It carries out the reaction sn-glycerol 1-phosphate + NAD(+) = dihydroxyacetone phosphate + NADH + H(+). The catalysed reaction is sn-glycerol 1-phosphate + NADP(+) = dihydroxyacetone phosphate + NADPH + H(+). Its pathway is membrane lipid metabolism; glycerophospholipid metabolism. Catalyzes the NAD(P)H-dependent reduction of dihydroxyacetonephosphate (DHAP or glycerone phosphate) to glycerol 1-phosphate (G1P). The G1P thus generated is used as the glycerophosphate backbone of phospholipids in the cellular membranes of Archaea. The protein is Glycerol-1-phosphate dehydrogenase [NAD(P)+] of Thermococcus sibiricus (strain DSM 12597 / MM 739).